A 116-amino-acid polypeptide reads, in one-letter code: uncharacterized protein (116 aa).

Residues 89–109 (VGFVILILLYILTNPNAIELI) form a helical membrane-spanning segment.

The protein belongs to the M.jannaschii MJ0023/MJ0349/MJ1072/MJ1074/MJ1107/MJECL16 family.

Its subcellular location is the membrane. This is an uncharacterized protein from Methanocaldococcus jannaschii (strain ATCC 43067 / DSM 2661 / JAL-1 / JCM 10045 / NBRC 100440) (Methanococcus jannaschii).